A 443-amino-acid chain; its full sequence is CBL-interacting protein kinase 2 (443 aa).

One can recognise a Protein kinase domain in the interval 13–267 (YEMGKLLGQG…MDKIMENPWF (255 aa)). ATP-binding positions include 19–27 (LGQGTFAKV) and lysine 42. Aspartate 135 serves as the catalytic Proton acceptor. Residues 153-182 (DFGLSALADCKRQDGLLHTTCGTPAYVAPE) form an activation loop region. Positions 302–329 (TLEKKPSNLNAFDIISLSTGLDLSGMFE) constitute an NAF domain. A PPI region spans residues 333-362 (KKESKFTSTSTASTIISKIEDIAKGLRLKL).

It belongs to the protein kinase superfamily. CAMK Ser/Thr protein kinase family. SNF1 subfamily. Mn(2+) serves as cofactor.

The enzyme catalyses L-seryl-[protein] + ATP = O-phospho-L-seryl-[protein] + ADP + H(+). It carries out the reaction L-threonyl-[protein] + ATP = O-phospho-L-threonyl-[protein] + ADP + H(+). Functionally, CIPK serine-threonine protein kinases interact with CBL proteins. Binding of a CBL protein to the regulatory NAF domain of CIPK protein lead to the activation of the kinase in a calcium-dependent manner. The chain is CBL-interacting protein kinase 2 (CIPK2) from Oryza sativa subsp. japonica (Rice).